A 342-amino-acid polypeptide reads, in one-letter code: Isopentenyl-diphosphate delta-isomerase (342 aa).

Residue 11–12 participates in substrate binding; it reads RK. Residues Ser-68, 69-71, Ser-99, and Asn-127 contribute to the FMN site; that span reads SMT. 99-101 provides a ligand contact to substrate; sequence SMR. Gln-162 lines the substrate pocket. Glu-163 lines the Mg(2+) pocket. Residues Lys-194, Thr-224, 274–276, and 295–296 contribute to the FMN site; these read GLK and AG.

Belongs to the IPP isomerase type 2 family. In terms of assembly, homooctamer. Dimer of tetramers. FMN serves as cofactor. Requires NADPH as cofactor. The cofactor is Mg(2+).

The protein localises to the cytoplasm. It carries out the reaction isopentenyl diphosphate = dimethylallyl diphosphate. In terms of biological role, involved in the biosynthesis of isoprenoids. Catalyzes the 1,3-allylic rearrangement of the homoallylic substrate isopentenyl (IPP) to its allylic isomer, dimethylallyl diphosphate (DMAPP). The sequence is that of Isopentenyl-diphosphate delta-isomerase from Rickettsia africae (strain ESF-5).